Consider the following 133-residue polypeptide: MAEKAVTIRTRKFMTNRLLSRKQFVIDVLHPGRANVSKAELKEKLARMYEVKDPNAIFVFKFRTHFGGGKSSGFGLIYDTVESAKKFEPKYRLIRNGLDTKIEKSRKQIKERKNRAKKIRGVKKTKAGDAKKK.

A disordered region spans residues 104–133; that stretch reads KSRKQIKERKNRAKKIRGVKKTKAGDAKKK. Residues 109-125 are compositionally biased toward basic residues; the sequence is IKERKNRAKKIRGVKKT.

Belongs to the eukaryotic ribosomal protein eS24 family.

The sequence is that of Small ribosomal subunit protein eS24z (RPS24A) from Arabidopsis thaliana (Mouse-ear cress).